A 353-amino-acid chain; its full sequence is Putative glutamine synthetase (353 aa).

The 84-residue stretch at 19–102 folds into the GS beta-grasp domain; sequence SIIEYVWIGG…VICDTYDVNG (84 aa). In terms of domain architecture, GS catalytic spans 109 to 353; the sequence is HRHNANIIFE…IILQTVCESD (245 aa).

Belongs to the glutamine synthetase family.

The enzyme catalyses L-glutamate + NH4(+) + ATP = L-glutamine + ADP + phosphate + H(+). The protein is Putative glutamine synthetase of Acanthamoeba polyphaga (Amoeba).